Consider the following 285-residue polypeptide: uncharacterized protein (285 aa).

Residue Ser-168 coordinates substrate. Tyr-181 serves as the catalytic Proton acceptor.

Belongs to the short-chain dehydrogenases/reductases (SDR) family.

This is an uncharacterized protein from Haemophilus influenzae (strain ATCC 51907 / DSM 11121 / KW20 / Rd).